A 312-amino-acid polypeptide reads, in one-letter code: Glyoxylate/hydroxypyruvate reductase A (312 aa).

Residue Arg227 is part of the active site. Residue His275 is the Proton donor of the active site.

This sequence belongs to the D-isomer specific 2-hydroxyacid dehydrogenase family. GhrA subfamily.

Its subcellular location is the cytoplasm. It carries out the reaction glycolate + NADP(+) = glyoxylate + NADPH + H(+). It catalyses the reaction (R)-glycerate + NAD(+) = 3-hydroxypyruvate + NADH + H(+). The enzyme catalyses (R)-glycerate + NADP(+) = 3-hydroxypyruvate + NADPH + H(+). In terms of biological role, catalyzes the NADPH-dependent reduction of glyoxylate and hydroxypyruvate into glycolate and glycerate, respectively. The chain is Glyoxylate/hydroxypyruvate reductase A from Shigella boydii serotype 18 (strain CDC 3083-94 / BS512).